The primary structure comprises 103 residues: Small ribosomal subunit protein uS10 (103 aa).

This sequence belongs to the universal ribosomal protein uS10 family. Part of the 30S ribosomal subunit.

Its function is as follows. Involved in the binding of tRNA to the ribosomes. This Wigglesworthia glossinidia brevipalpis protein is Small ribosomal subunit protein uS10.